Consider the following 346-residue polypeptide: Histidinol-phosphate aminotransferase (346 aa).

K209 is modified (N6-(pyridoxal phosphate)lysine).

This sequence belongs to the class-II pyridoxal-phosphate-dependent aminotransferase family. Histidinol-phosphate aminotransferase subfamily. In terms of assembly, homodimer. Pyridoxal 5'-phosphate is required as a cofactor.

It carries out the reaction L-histidinol phosphate + 2-oxoglutarate = 3-(imidazol-4-yl)-2-oxopropyl phosphate + L-glutamate. The protein operates within amino-acid biosynthesis; L-histidine biosynthesis; L-histidine from 5-phospho-alpha-D-ribose 1-diphosphate: step 7/9. In Vibrio campbellii (strain ATCC BAA-1116), this protein is Histidinol-phosphate aminotransferase.